An 875-amino-acid polypeptide reads, in one-letter code: Kelch-like protein 29 (875 aa).

Residues 115 to 126 (WGQTPINQSTPW) are compositionally biased toward polar residues. Disordered regions lie at residues 115–145 (WGQT…PGTG) and 248–291 (GPTA…DSAH). A compositionally biased stretch (basic and acidic residues) spans 131–140 (PPSKQMRESD). The BTB domain maps to 329–401 (TDLKIVVEGR…VYTGSLVIDS (73 aa)). Kelch repeat units lie at residues 585 to 635 (VIVL…VSAG), 637 to 683 (NIYL…VYDG), 684 to 730 (KIYT…VCGG), 732 to 778 (IYVF…TLNG), 779 to 821 (FVFI…VLDG), and 822 to 870 (KIYA…VIKK).

This chain is Kelch-like protein 29 (KLHL29), found in Homo sapiens (Human).